The primary structure comprises 362 residues: Diphosphomevalonate decarboxylase (362 aa).

(R)-5-diphosphomevalonate-binding positions include 17 to 20 (YWGK), R72, 150 to 155 (SGSACR), and T206.

Belongs to the diphosphomevalonate decarboxylase family. In terms of assembly, homodimer.

The enzyme catalyses (R)-5-diphosphomevalonate + ATP = isopentenyl diphosphate + ADP + phosphate + CO2. Its pathway is isoprenoid biosynthesis; isopentenyl diphosphate biosynthesis via mevalonate pathway; isopentenyl diphosphate from (R)-mevalonate: step 3/3. In terms of biological role, diphosphomevalonate decarboxylase; part of the second module of ergosterol biosynthesis pathway that includes the middle steps of the pathway. MVD1 converts diphosphomevalonate into isopentenyl diphosphate. The second module is carried out in the vacuole and involves the formation of farnesyl diphosphate, which is also an important intermediate in the biosynthesis of ubiquinone, dolichol, heme and prenylated proteins. Activity by the mevalonate kinase ERG12 first converts mevalonate into 5-phosphomevalonate. 5-phosphomevalonate is then further converted to 5-diphosphomevalonate by the phosphomevalonate kinase ERG8. The diphosphomevalonate decarboxylase MVD then produces isopentenyl diphosphate. The isopentenyl-diphosphate delta-isomerase IDI1 then catalyzes the 1,3-allylic rearrangement of the homoallylic substrate isopentenyl (IPP) to its highly electrophilic allylic isomer, dimethylallyl diphosphate (DMAPP). Finally the farnesyl diphosphate synthase ERG20 catalyzes the sequential condensation of isopentenyl pyrophosphate with dimethylallyl pyrophosphate, and then with the resultant geranylpyrophosphate to the ultimate product farnesyl pyrophosphate. This Candida albicans (strain SC5314 / ATCC MYA-2876) (Yeast) protein is Diphosphomevalonate decarboxylase.